A 261-amino-acid chain; its full sequence is Sulfur carrier protein FdhD (261 aa).

Cys-105 serves as the catalytic Cysteine persulfide intermediate. 245–250 (FIRGDR) is a Mo-bis(molybdopterin guanine dinucleotide) binding site.

Belongs to the FdhD family.

It localises to the cytoplasm. In terms of biological role, required for formate dehydrogenase (FDH) activity. Acts as a sulfur carrier protein that transfers sulfur from IscS to the molybdenum cofactor prior to its insertion into FDH. This is Sulfur carrier protein FdhD from Listeria monocytogenes serovar 1/2a (strain ATCC BAA-679 / EGD-e).